The following is a 230-amino-acid chain: Thymidylate kinase (230 aa).

G20–S27 serves as a coordination point for ATP.

Belongs to the thymidylate kinase family.

The catalysed reaction is dTMP + ATP = dTDP + ADP. Its function is as follows. Phosphorylation of dTMP to form dTDP in both de novo and salvage pathways of dTTP synthesis. In Nitrobacter winogradskyi (strain ATCC 25391 / DSM 10237 / CIP 104748 / NCIMB 11846 / Nb-255), this protein is Thymidylate kinase.